The sequence spans 430 residues: Glutamate-1-semialdehyde 2,1-aminomutase (430 aa).

An N6-(pyridoxal phosphate)lysine modification is found at K265.

It belongs to the class-III pyridoxal-phosphate-dependent aminotransferase family. HemL subfamily. Homodimer. Pyridoxal 5'-phosphate is required as a cofactor.

Its subcellular location is the cytoplasm. The catalysed reaction is (S)-4-amino-5-oxopentanoate = 5-aminolevulinate. Its pathway is porphyrin-containing compound metabolism; protoporphyrin-IX biosynthesis; 5-aminolevulinate from L-glutamyl-tRNA(Glu): step 2/2. This is Glutamate-1-semialdehyde 2,1-aminomutase from Shewanella oneidensis (strain ATCC 700550 / JCM 31522 / CIP 106686 / LMG 19005 / NCIMB 14063 / MR-1).